The chain runs to 137 residues: Peptide methionine sulfoxide reductase MsrB (137 aa).

Residues 7–129 (PEELKNGLSE…NSASLSFTDE (123 aa)) form the MsrB domain. Cysteine 46, cysteine 49, cysteine 95, and cysteine 98 together coordinate Zn(2+). The Nucleophile role is filled by cysteine 118.

It belongs to the MsrB Met sulfoxide reductase family. Zn(2+) is required as a cofactor.

The catalysed reaction is L-methionyl-[protein] + [thioredoxin]-disulfide + H2O = L-methionyl-(R)-S-oxide-[protein] + [thioredoxin]-dithiol. The polypeptide is Peptide methionine sulfoxide reductase MsrB (Klebsiella pneumoniae subsp. pneumoniae (strain ATCC 700721 / MGH 78578)).